We begin with the raw amino-acid sequence, 112 residues long: Protein lin-52 homolog (112 aa).

The protein belongs to the lin-52 family. As to quaternary structure, component of the DREAM complex. In terms of tissue distribution, expressed in the brain, liver and retina. Highly expressed in the retinal ganglion cell and inner nuclear layers at the parr stage. Expressed at a lower level in inner segments of some retinal photoreceptors.

Its function is as follows. May be involved in retinal development. This chain is Protein lin-52 homolog (lin52), found in Oncorhynchus mykiss (Rainbow trout).